The chain runs to 191 residues: MATITADNNSNSHFEMEIEAESAILQQIQNKMAKHLESAAYVPPTEEEQKAIDAKSVFIGNVDFNSTIEEIEEHFKGCGQIVKTTIPKDKFTKKQKNFAYIEFDDSSSIENALVMNGSLFRSRPIVVTAKRTNIPGMGHGVRGSSRGTFGRGRGAARGAPGRQQTVVVKYVYVNGPNRGGRGGRGRRFNPY.

Positions 55–132 (KSVFIGNVDF…RPIVVTAKRT (78 aa)) constitute an RRM domain. Residues 136 to 160 (GMGHGVRGSSRGTFGRGRGAARGAP) are disordered.

This is Putative RNA-binding protein EEED8.4 from Caenorhabditis elegans.